We begin with the raw amino-acid sequence, 90 residues long: Probable Fe(2+)-trafficking protein (90 aa).

This sequence belongs to the Fe(2+)-trafficking protein family.

Functionally, could be a mediator in iron transactions between iron acquisition and iron-requiring processes, such as synthesis and/or repair of Fe-S clusters in biosynthetic enzymes. The sequence is that of Probable Fe(2+)-trafficking protein from Paracidovorax citrulli (strain AAC00-1) (Acidovorax citrulli).